Reading from the N-terminus, the 247-residue chain is Large ribosomal subunit protein uL30 (247 aa).

Met-1 bears the N-acetylmethionine mark. 4 repeat units span residues 7–17 (KKKVPAVPETL), 18–29 (KKKRRNFAELKI), 30–41 (KRLRKKFAQKML), and 42–53 (RKARRKLIYEKA). Residues 7-53 (KKKVPAVPETLKKKRRNFAELKIKRLRKKFAQKMLRKARRKLIYEKA) form a 4 X 12 AA tandem repeats region. Thr-16 carries the post-translational modification Phosphothreonine. Lys-123 carries the post-translational modification N6-acetyllysine. Lys-126 is modified (N6-succinyllysine). Position 138 is a phosphotyrosine (Tyr-138).

Belongs to the universal ribosomal protein uL30 family. In terms of assembly, component of the large ribosomal subunit. Homodimer. Interacts with DHX33.

Its subcellular location is the cytoplasm. Functionally, component of the large ribosomal subunit. The ribosome is a large ribonucleoprotein complex responsible for the synthesis of proteins in the cell. Binds to G-rich structures in 28S rRNA and in mRNAs. Plays a regulatory role in the translation apparatus; inhibits cell-free translation of mRNAs. This is Large ribosomal subunit protein uL30 (RPL7) from Pongo abelii (Sumatran orangutan).